The sequence spans 425 residues: Formyl-CoA:oxalate CoA-transferase (425 aa).

Residues Q17–S18, R38, L72–K75, N96–G98, R104, and K136–E139 each bind CoA. D168 serves as the catalytic Nucleophile. A substrate-binding site is contributed by G247–Q249.

Belongs to the CoA-transferase III family. Frc subfamily. Homodimer.

It catalyses the reaction formyl-CoA + oxalate = oxalyl-CoA + formate. Its pathway is metabolic intermediate degradation; oxalate degradation; CO(2) and formate from oxalate: step 1/2. Functionally, involved in the catabolism of oxalate and in the adapatation to low pH via the induction of the oxalate-dependent acid tolerance response (ATR). Catalyzes the transfer of the CoA moiety from formyl-CoA to oxalate. The polypeptide is Formyl-CoA:oxalate CoA-transferase (Rhodopseudomonas palustris (strain TIE-1)).